Here is a 295-residue protein sequence, read N- to C-terminus: MDQKQIEEIVRSVMASMGQTAPAPSEAKCTTTTCAAPVTSESCALDLGSAEAKAWIGVENPHRADVLTELRRSTVARVCTGRAGPRPRTQALLRFLADHSRSKDTVLKEVPEEWVKAQGLLEVRSEISDKNLYLTRPDMGRRLCAEAVEALKAQCVANPDVQVVISDGLSTDAITVNYEEILPPLMAGLKQAGLKVGTPFFVRYGRVKIEDQIGEILGAKVVILLVGERPGLGQSESLSCYAVYSPRMATTVEADRTCISNIHQGGTPPVEAAAVIVDLAKRMLEQKASGINMTR.

Adenosylcob(III)alamin-binding residues include Val207, Glu228, and Cys258.

This sequence belongs to the EutC family. The basic unit is a heterodimer which dimerizes to form tetramers. The heterotetramers trimerize; 6 large subunits form a core ring with 6 small subunits projecting outwards. It depends on adenosylcob(III)alamin as a cofactor.

Its subcellular location is the bacterial microcompartment. The catalysed reaction is ethanolamine = acetaldehyde + NH4(+). It functions in the pathway amine and polyamine degradation; ethanolamine degradation. Catalyzes the deamination of various vicinal amino-alcohols to oxo compounds. Allows this organism to utilize ethanolamine as the sole source of nitrogen and carbon in the presence of external vitamin B12. This Escherichia coli O139:H28 (strain E24377A / ETEC) protein is Ethanolamine ammonia-lyase small subunit.